We begin with the raw amino-acid sequence, 394 residues long: Na(+)/H(+) antiporter NhaA (394 aa).

Helical transmembrane passes span 14-34 (AGGL…NSAL), 59-79 (LLLW…GLEV), 95-115 (VFPA…YLLF), 125-145 (GWAI…ALLG), 154-174 (VFLL…IALF), 179-199 (VSLQ…YMNW), 213-233 (LVLW…GVIV), 254-274 (GLHP…NAGV), 292-312 (IATG…WLAV), 328-348 (IFAV…IASL), and 363-383 (LGIL…LRLV).

Belongs to the NhaA Na(+)/H(+) (TC 2.A.33) antiporter family.

The protein localises to the cell inner membrane. It catalyses the reaction Na(+)(in) + 2 H(+)(out) = Na(+)(out) + 2 H(+)(in). In terms of biological role, na(+)/H(+) antiporter that extrudes sodium in exchange for external protons. In Yersinia pseudotuberculosis serotype IB (strain PB1/+), this protein is Na(+)/H(+) antiporter NhaA.